The chain runs to 501 residues: Spore development regulator VOSA (501 aa).

3 disordered regions span residues 26–55, 67–88, and 228–274; these read GQFG…GQEP, PQRA…IDPP, and AMTT…DTRG. Positions 35–50 are enriched in polar residues; sequence PPQAETQMSAQASAQA. Residues 52 to 223 enclose the Velvet domain; sequence GQEPEPDYKL…SDQGVRLRVR (172 aa). Basic and acidic residues-rich tracts occupy residues 67 to 85 and 237 to 252; these read PQRA…RKPI and QHAE…DRKQ. Polar residues predominate over residues 253 to 271; sequence TSAVSRHSSINENDSTPTD. The short motif at 364–371 is the Nuclear localization signal element; sequence MSSHHGYT. Disordered stretches follow at residues 378-455 and 474-501; these read FAPH…QQTP and PGQL…EPGA.

It belongs to the velvet family. VosA subfamily. Forms a heterodimeric complex with VELB; the formation of the VELB-VOSA complex is light-dependent.

The protein resides in the nucleus. Its function is as follows. Component of the VELB-VOSA heterodimeric complex that plays a dual role in activating genes associated with spore maturation and repressing certain development-associated genes. The complex binds DNA through the DNA-binding domain of VOSA that recognizes an 11-nucleotide consensus sequence 5'-CTGGCCGCGGC-3' consisting of two motifs in the promoters of key developmental regulatory genes. Appears dispensable for the development and pathogenicity. In Pyricularia oryzae (strain 70-15 / ATCC MYA-4617 / FGSC 8958) (Rice blast fungus), this protein is Spore development regulator VOSA.